The following is a 616-amino-acid chain: Dihydroxy-acid dehydratase (616 aa).

Aspartate 81 contacts Mg(2+). Cysteine 122 is a binding site for [2Fe-2S] cluster. The Mg(2+) site is built by aspartate 123 and lysine 124. At lysine 124 the chain carries N6-carboxylysine. [2Fe-2S] cluster is bound at residue cysteine 195. Glutamate 491 serves as a coordination point for Mg(2+). The active-site Proton acceptor is serine 517.

Belongs to the IlvD/Edd family. In terms of assembly, homodimer. [2Fe-2S] cluster is required as a cofactor. Requires Mg(2+) as cofactor.

It carries out the reaction (2R)-2,3-dihydroxy-3-methylbutanoate = 3-methyl-2-oxobutanoate + H2O. The catalysed reaction is (2R,3R)-2,3-dihydroxy-3-methylpentanoate = (S)-3-methyl-2-oxopentanoate + H2O. Its pathway is amino-acid biosynthesis; L-isoleucine biosynthesis; L-isoleucine from 2-oxobutanoate: step 3/4. The protein operates within amino-acid biosynthesis; L-valine biosynthesis; L-valine from pyruvate: step 3/4. Its function is as follows. Functions in the biosynthesis of branched-chain amino acids. Catalyzes the dehydration of (2R,3R)-2,3-dihydroxy-3-methylpentanoate (2,3-dihydroxy-3-methylvalerate) into 2-oxo-3-methylpentanoate (2-oxo-3-methylvalerate) and of (2R)-2,3-dihydroxy-3-methylbutanoate (2,3-dihydroxyisovalerate) into 2-oxo-3-methylbutanoate (2-oxoisovalerate), the penultimate precursor to L-isoleucine and L-valine, respectively. This Salmonella gallinarum (strain 287/91 / NCTC 13346) protein is Dihydroxy-acid dehydratase.